Here is a 239-residue protein sequence, read N- to C-terminus: tRNA (guanine-N(7)-)-methyltransferase (239 aa).

Positions 69, 94, 121, and 144 each coordinate S-adenosyl-L-methionine. D144 is a catalytic residue. K148 lines the substrate pocket. Residues 150-155 (RHNKRR) form an interaction with RNA region. Residues D180 and 217–220 (TKFE) contribute to the substrate site.

This sequence belongs to the class I-like SAM-binding methyltransferase superfamily. TrmB family. Monomer.

The enzyme catalyses guanosine(46) in tRNA + S-adenosyl-L-methionine = N(7)-methylguanosine(46) in tRNA + S-adenosyl-L-homocysteine. It functions in the pathway tRNA modification; N(7)-methylguanine-tRNA biosynthesis. Its function is as follows. Catalyzes the formation of N(7)-methylguanine at position 46 (m7G46) in tRNA. The polypeptide is tRNA (guanine-N(7)-)-methyltransferase (Shigella boydii serotype 4 (strain Sb227)).